Here is an 82-residue protein sequence, read N- to C-terminus: Putative membrane protein insertion efficiency factor (82 aa).

The protein belongs to the UPF0161 family.

The protein localises to the cell inner membrane. Its function is as follows. Could be involved in insertion of integral membrane proteins into the membrane. The polypeptide is Putative membrane protein insertion efficiency factor (Synechococcus elongatus (strain ATCC 33912 / PCC 7942 / FACHB-805) (Anacystis nidulans R2)).